Reading from the N-terminus, the 120-residue chain is Glycine cleavage system H protein (120 aa).

The region spanning 17–99 (VATVGITAHA…QGDGWLYRLK (83 aa)) is the Lipoyl-binding domain. K58 is modified (N6-lipoyllysine).

It belongs to the GcvH family. In terms of assembly, the glycine cleavage system is composed of four proteins: P, T, L and H. It depends on (R)-lipoate as a cofactor.

Functionally, the glycine cleavage system catalyzes the degradation of glycine. The H protein shuttles the methylamine group of glycine from the P protein to the T protein. The polypeptide is Glycine cleavage system H protein (Methylorubrum extorquens (strain PA1) (Methylobacterium extorquens)).